Reading from the N-terminus, the 92-residue chain is Small ribosomal subunit protein uS19 (92 aa).

The protein belongs to the universal ribosomal protein uS19 family.

Functionally, protein S19 forms a complex with S13 that binds strongly to the 16S ribosomal RNA. In Borrelia hermsii (strain HS1 / DAH), this protein is Small ribosomal subunit protein uS19.